Consider the following 447-residue polypeptide: Kynurenine 3-monooxygenase (447 aa).

The protein belongs to the aromatic-ring hydroxylase family. KMO subfamily. It depends on FAD as a cofactor.

The enzyme catalyses L-kynurenine + NADPH + O2 + H(+) = 3-hydroxy-L-kynurenine + NADP(+) + H2O. It participates in cofactor biosynthesis; NAD(+) biosynthesis; quinolinate from L-kynurenine: step 1/3. Catalyzes the hydroxylation of L-kynurenine (L-Kyn) to form 3-hydroxy-L-kynurenine (L-3OHKyn). Required for synthesis of quinolinic acid. The polypeptide is Kynurenine 3-monooxygenase (Christiangramia forsetii (strain DSM 17595 / CGMCC 1.15422 / KT0803) (Gramella forsetii)).